Consider the following 464-residue polypeptide: MHSRTNCLQTSVRAPQPHFRPFTAVKTCRQRCSTTAAAAKRDQAQEQQPWIQVGLGLAAAATAVAVGLGAAALPAQAVTSEQLLFLEAWRAVDRAYVDKSFNGQSWFKLRETYLKKEPMDRRAQTYDAIRKLLAVLDDPFTRFLEPSRLAALRRGTAGSVTGVGLEITYDGGSGKDVVVLTPAPGGPAEKAGARAGDVIVTVDGTAVKGLSLYDVSDLLQGEADSQVEVVLHAPGAPSNTRTLQLTRQKVTINPVTFTTCSNVAAAALPPGAAKQQLGYVRLATFNSNTTAAAQQAFTELSKQGVAGLVLDIRNNGGGLFPAGVNVARMLVDRGDLVLIADSQGIRDIYSADGNSIDSATPLVVLVNRGTASASEVLAGALKDSKRGLIAGERTFGKGLIQTVVDLSDGSGVAVTVARYQTPAGVDINKIGVSPDVQLDPEVLPTDLEGVCRVLGSDAAPRLFG.

The N-terminal 32 residues, 1 to 32 (MHSRTNCLQTSVRAPQPHFRPFTAVKTCRQRC), are a transit peptide targeting the chloroplast. A thylakoid-targeting transit peptide spans 33–77 (STTAAAAKRDQAQEQQPWIQVGLGLAAAATAVAVGLGAAALPAQA). The PDZ domain occupies 149–234 (LAALRRGTAG…SQVEVVLHAP (86 aa)). Residues S372 and K397 each act as charge relay system in the active site.

This sequence belongs to the peptidase S41A family. As to quaternary structure, monomer.

The protein resides in the plastid. The protein localises to the chloroplast thylakoid lumen. The enzyme catalyses The enzyme shows specific recognition of a C-terminal tripeptide, Xaa-Yaa-Zaa, in which Xaa is preferably Ala or Leu, Yaa is preferably Ala or Tyr, and Zaa is preferably Ala, but then cleaves at a variable distance from the C-terminus. A typical cleavage is -Ala-Ala-|-Arg-Ala-Ala-Lys-Glu-Asn-Tyr-Ala-Leu-Ala-Ala.. With respect to regulation, not inhibited by antipain, 4-amidinophenylmethanesulfonyl fluoride, aprotinin, chymostatin, 3,4-dichloroisocoumarin, diisopropyl fluorophosphate, E64, EDTA, EGTA, iodoacetamide, leupeptin, pepstatin, o-phenanthroline, N-ethylmaleimide, phosphoramidon or phenylmethylsulfonyl fluoride. Its function is as follows. Protease involved in the C-terminal processing of the chloroplastic D1 protein of photosystem II. This proteolytic processing is necessary to allow the light-driven assembly of the tetranuclear manganese cluster, which is responsible for photosynthetic water oxidation. The chain is C-terminal processing peptidase, chloroplastic (ctpA) from Tetradesmus obliquus (Green alga).